A 63-amino-acid chain; its full sequence is ATP synthase membrane subunit K, mitochondrial (63 aa).

Residues Thr15 to Val37 traverse the membrane as a helical segment.

F-type ATPases have 2 components, CF(1) - the catalytic core - and CF(0) - the membrane proton channel. CF(1) has five subunits: alpha(3), beta(3), gamma(1), delta(1), epsilon(1). CF(0) has three main subunits: a, b and c. The ATP synthase complex/complex V exists as a monomeric and a dimeric supercomplex that helps shape mitochondrial cristae to optimize proton flow.

The protein localises to the mitochondrion membrane. Its function is as follows. Mitochondrial membrane ATP synthase (F(1)F(0) ATP synthase or Complex V) produces ATP from ADP in the presence of a proton gradient across the membrane which is generated by electron transport complexes of the respiratory chain. F-type ATPases consist of two structural domains, F(1) - containing the extramembraneous catalytic core and F(0) - containing the membrane proton channel, linked together by a central stalk and a peripheral stalk. During catalysis, ATP synthesis in the catalytic domain of F(1) is coupled via a rotary mechanism of the central stalk subunits to proton translocation. ATP5MK is a minor subunit of the mitochondrial membrane ATP synthase required for dimerization of the ATP synthase complex and as such regulates ATP synthesis in the mitochondria. The polypeptide is ATP synthase membrane subunit K, mitochondrial (Drosophila melanogaster (Fruit fly)).